Here is a 160-residue protein sequence, read N- to C-terminus: Major strawberry allergen Fra a 1-E (160 aa).

Belongs to the BetVI family. Monomer. Interacts with AP. As to expression, highly expressed in roots. Expressed in open flowers. Expressed at low levels in leaves, flower buds and fruits.

Functionally, involved in the control of flavonoid biosynthesis in fruits, probably by binding directly to natural flavonoids. Binds the natural flavonoid quercetin-3-O-glucuronide with affinities in the low micromolar range. The chain is Major strawberry allergen Fra a 1-E from Fragaria ananassa (Strawberry).